The primary structure comprises 456 residues: Glycine--tRNA ligase (456 aa).

Substrate contacts are provided by Arg-98 and Glu-168. Residues 200 to 202 (RNE), 210 to 215 (FRTREF), 285 to 286 (EL), and 329 to 332 (GVER) contribute to the ATP site. 215 to 219 (FEQME) serves as a coordination point for substrate. 325–329 (EPSVG) is a binding site for substrate.

The protein belongs to the class-II aminoacyl-tRNA synthetase family. As to quaternary structure, homodimer.

The protein localises to the cytoplasm. It catalyses the reaction tRNA(Gly) + glycine + ATP = glycyl-tRNA(Gly) + AMP + diphosphate. Catalyzes the attachment of glycine to tRNA(Gly). The polypeptide is Glycine--tRNA ligase (Mycoplasma capricolum subsp. capricolum (strain California kid / ATCC 27343 / NCTC 10154)).